The sequence spans 385 residues: cAMP-dependent protein kinase, catalytic subunit-like (385 aa).

The region spanning 63-317 (LERIVTIGKG…TQDVKDHKWF (255 aa)) is the Protein kinase domain. Residues 69–77 (IGKGTFGRV) and K92 contribute to the ATP site. Residue D186 is the Proton acceptor of the active site. Positions 318–385 (EKVNWDDTLH…QRERDLFAEW (68 aa)) constitute an AGC-kinase C-terminal domain.

This sequence belongs to the protein kinase superfamily. Ser/Thr protein kinase family. cAMP subfamily.

It catalyses the reaction L-seryl-[protein] + ATP = O-phospho-L-seryl-[protein] + ADP + H(+). The enzyme catalyses L-threonyl-[protein] + ATP = O-phospho-L-threonyl-[protein] + ADP + H(+). The polypeptide is cAMP-dependent protein kinase, catalytic subunit-like (Caenorhabditis briggsae).